We begin with the raw amino-acid sequence, 152 residues long: Ribosome maturation factor RimP (152 aa).

The protein belongs to the RimP family.

It is found in the cytoplasm. Required for maturation of 30S ribosomal subunits. In Pseudomonas aeruginosa (strain LESB58), this protein is Ribosome maturation factor RimP.